The chain runs to 858 residues: Bifunctional uridylyltransferase/uridylyl-removing enzyme (858 aa).

A uridylyltransferase region spans residues 1-324 (MSASVAEPPP…PATSGVTRVL (324 aa)). A uridylyl-removing region spans residues 325–681 (SPGRFVEKQG…ARPSPVGDAL (357 aa)). Positions 443–565 (VDQHILMVLR…VGSERRLTAL (123 aa)) constitute an HD domain. ACT domains follow at residues 682–761 (QVLV…PEPS) and 790–858 (ILSV…AIAV).

Belongs to the GlnD family. The cofactor is Mg(2+).

The enzyme catalyses [protein-PII]-L-tyrosine + UTP = [protein-PII]-uridylyl-L-tyrosine + diphosphate. The catalysed reaction is [protein-PII]-uridylyl-L-tyrosine + H2O = [protein-PII]-L-tyrosine + UMP + H(+). With respect to regulation, uridylyltransferase (UTase) activity is inhibited by glutamine, while glutamine activates uridylyl-removing (UR) activity. Functionally, modifies, by uridylylation and deuridylylation, the PII regulatory proteins (GlnB and homologs), in response to the nitrogen status of the cell that GlnD senses through the glutamine level. Under low glutamine levels, catalyzes the conversion of the PII proteins and UTP to PII-UMP and PPi, while under higher glutamine levels, GlnD hydrolyzes PII-UMP to PII and UMP (deuridylylation). Thus, controls uridylylation state and activity of the PII proteins, and plays an important role in the regulation of nitrogen assimilation and metabolism. This is Bifunctional uridylyltransferase/uridylyl-removing enzyme from Burkholderia pseudomallei (strain K96243).